The sequence spans 262 residues: Expansin-A7 (262 aa).

The N-terminal stretch at 1–30 (MGPISSSWSFNKFFSIVFVVFAISGEFVAG) is a signal peptide. In terms of domain architecture, Expansin-like EG45 spans 55–167 (GGACGYGNLF…RRVPCQRSGG (113 aa)). Disulfide bonds link C58–C86, C89–C162, and C94–C100. The Expansin-like CBD domain occupies 177–257 (YWLLIFVMNV…NWSGGKTYKS (81 aa)).

Belongs to the expansin family. Expansin A subfamily.

It is found in the secreted. The protein localises to the cell wall. The protein resides in the membrane. In terms of biological role, causes loosening and extension of plant cell walls by disrupting non-covalent bonding between cellulose microfibrils and matrix glucans. No enzymatic activity has been found. The protein is Expansin-A7 (EXPA7) of Arabidopsis thaliana (Mouse-ear cress).